A 358-amino-acid polypeptide reads, in one-letter code: Vanillin synthase (358 aa).

The signal sequence occupies residues 1–21 (MARLLLLLVGVLIACAAGARA). The propeptide at 22–140 (GSEFLAEDNP…RGNHKLTSAI (119 aa)) is activation peptide. A glycan (N-linked (GlcNAc...) asparagine) is linked at N125. Intrachain disulfides connect C162–C205 and C196–C238. C165 is an active-site residue. N254 carries N-linked (GlcNAc...) asparagine glycosylation. Residues C296 and C346 are joined by a disulfide bond. Active-site residues include H305 and N325.

Belongs to the peptidase C1 family.

It catalyses the reaction (E)-ferulate + H2O = vanillin + acetate. It carries out the reaction 4-O-beta-D-glucosyl-trans-ferulate + H2O = 4-O-beta-D-glucosyl-vanillin + acetate. The protein operates within aromatic compound metabolism; phenylpropanoid biosynthesis. In terms of biological role, involved in the biosynthesis of vanillin and derivative natural products. Catalyzes the double carbon bond cleavage of ferulic acid to vanillin and of respective glucosides. In Glechoma hederacea (Ground-ivy), this protein is Vanillin synthase.